Reading from the N-terminus, the 329-residue chain is Malate dehydrogenase (329 aa).

12–18 serves as a coordination point for NAD(+); that stretch reads GAAGQIG. Residues Arg93 and Arg99 each contribute to the substrate site. NAD(+)-binding positions include Asn106, Gln113, and 130-132; that span reads TGN. 2 residues coordinate substrate: Asn132 and Arg163. The active-site Proton acceptor is His188.

It belongs to the LDH/MDH superfamily. MDH type 2 family.

The catalysed reaction is (S)-malate + NAD(+) = oxaloacetate + NADH + H(+). Functionally, catalyzes the reversible oxidation of malate to oxaloacetate. The chain is Malate dehydrogenase from Mycobacterium leprae (strain TN).